The following is a 425-amino-acid chain: uncharacterized protein (425 aa).

12 consecutive transmembrane segments (helical) span residues 15-35, 48-68, 84-104, 107-127, 149-169, 174-194, 225-245, 271-291, 295-315, 331-351, 370-390, and 395-415; these read LICA…SQML, LIGA…WAPL, MLLS…FDPL, LGTV…QDIV, INAY…LAAI, TVFL…LFLA, VIQA…DSFA, ALWS…KLGI, LWLF…LAAF, VVIA…VAFM, LSAL…GAVG, and FWFC…VAPL.

The protein to E.coli AmpG and yeast YBR220c.

It localises to the cell inner membrane. This is an uncharacterized protein from Haemophilus influenzae (strain ATCC 51907 / DSM 11121 / KW20 / Rd).